Here is a 411-residue protein sequence, read N- to C-terminus: MPAPAATRRDRIEDELGAHNYQPLDVVLARGSGVWLYDTAGRRYLDCLSAYSAVNQGHCHPRILAAMVEQAQRLTLTSRAFRHDQLAPLYEDLARLTGAHKVLPMNSGAEAVETALKAVRKWGYEARGVPAGQAEIIVCANNFHGRTLGIVGFSTDPDARGGYGPFAPGFTVVPFGDFAALQAAVTPRTVAFLVEPIQGEAGVILPPPGYFRQVRKLCSERDIVLILDEIQTGLGRTGAFLAEAHEGIEADVTLIGKALSGGFYPVSAVLSNQAVLGIFQPGQHGSTFGGNPLACAVARAALRVLHDEGMIDNAREQGAYFMQRLRALPGPVREVRGRGLMLALELEPDAGPARAYCERLMARGMLVKDTHGQTLRLSPPLIVTREQIDWACAQLAHVLAHSAPGSSGGPS.

Lysine 257 is subject to N6-(pyridoxal phosphate)lysine.

This sequence belongs to the class-III pyridoxal-phosphate-dependent aminotransferase family. OAT subfamily. Pyridoxal 5'-phosphate serves as cofactor.

It localises to the cytoplasm. The catalysed reaction is a 2-oxocarboxylate + L-ornithine = L-glutamate 5-semialdehyde + an L-alpha-amino acid. It functions in the pathway amino-acid biosynthesis; L-proline biosynthesis; L-glutamate 5-semialdehyde from L-ornithine: step 1/1. In terms of biological role, catalyzes the interconversion of ornithine to glutamate semialdehyde. The protein is Ornithine aminotransferase of Bordetella bronchiseptica (strain ATCC BAA-588 / NCTC 13252 / RB50) (Alcaligenes bronchisepticus).